A 399-amino-acid polypeptide reads, in one-letter code: Large envelope protein (399 aa).

Met1 carries the N-acetylmethionine modification. A lipid anchor (N-myristoyl glycine; by host) is attached at Gly2. The interval 2–118 is pre-S1; the sequence is GLSWTVPLEW…PPLRDTHPQA (117 aa). The tract at residues 2-173 is pre-S; it reads GLSWTVPLEW…FSRIGDPAPN (172 aa). Over 2-180 the chain is Virion surface; in external conformation; the sequence is GLSWTVPLEW…APNMESITSG (179 aa). At 2–252 the chain is on the intravirion; in internal conformation side; sequence GLSWTVPLEW…PGYRWMCLRR (251 aa). N-linked (GlcNAc...) asparagine glycosylation occurs at Ser4. Positions 85–110 are disordered; the sequence is KTLPADPPPASTNRQSGRQPTPITPP. The span at 95-105 shows a compositional bias: polar residues; sequence STNRQSGRQPT. Residues 119-173 form a pre-S2 region; it reads MQWNSTTFHQALQDPRVRGLYFPAGGSSSGTVNPVPTTASLISSIFSRIGDPAPN. A helical transmembrane segment spans residues 181–201; sequence FLGPLLVLQAGFFLLTKILTI. Over 202-252 the chain is Intravirion; in external conformation; sequence PQSLDSWWTSLNFLGGAPVCLGQNSQSPTSNHSPTSCPPICPGYRWMCLRR. Residues 253 to 273 form a helical membrane-spanning segment; it reads FIIFLFILLLCLIFLLVLLDY. The Virion surface portion of the chain corresponds to 274–347; the sequence is QGMLPVCPLI…WASARFSWLS (74 aa). A glycan (N-linked (GlcNAc...) asparagine; by host) is linked at Asn319. Residues 348–368 form a helical membrane-spanning segment; the sequence is LLVPFVQWFAGLSPTVWLSVI. Over 369-374 the chain is Intravirion; sequence WMMWYW. Residues 375–397 form a helical membrane-spanning segment; that stretch reads GPSLYDILSPFIPLLPIFFCLWV. At 398 to 399 the chain is on the virion surface side; that stretch reads YI.

It belongs to the orthohepadnavirus major surface antigen family. In terms of assembly, in its internal form (Li-HBsAg), interacts with the capsid protein and with the isoform S. Interacts with host chaperone CANX. Associates with host chaperone CANX through its pre-S2 N glycan; this association may be essential for isoform M proper secretion. As to quaternary structure, interacts with isoform L. Interacts with the antigens of satellite virus HDV (HDVAgs); this interaction is required for encapsidation of HDV genomic RNA. Post-translationally, isoform M is N-terminally acetylated by host at a ratio of 90%, and N-glycosylated by host at the pre-S2 region. Myristoylated.

The protein resides in the virion membrane. Functionally, the large envelope protein exists in two topological conformations, one which is termed 'external' or Le-HBsAg and the other 'internal' or Li-HBsAg. In its external conformation the protein attaches the virus to cell receptors and thereby initiating infection. This interaction determines the species specificity and liver tropism. This attachment induces virion internalization predominantly through caveolin-mediated endocytosis. The large envelope protein also assures fusion between virion membrane and endosomal membrane. In its internal conformation the protein plays a role in virion morphogenesis and mediates the contact with the nucleocapsid like a matrix protein. Its function is as follows. The middle envelope protein plays an important role in the budding of the virion. It is involved in the induction of budding in a nucleocapsid independent way. In this process the majority of envelope proteins bud to form subviral lipoprotein particles of 22 nm of diameter that do not contain a nucleocapsid. The protein is Large envelope protein of Homo sapiens (Human).